Consider the following 736-residue polypeptide: Transcription factor E2F8 (736 aa).

The tract at residues 1–26 (MEEGSKENCGFNGSPMGSRSPPKQLT) is disordered. The segment covering 15 to 26 (PMGSRSPPKQLT) has biased composition (polar residues). DNA-binding regions lie at residues 98 to 167 (RKEK…IWHG) and 240 to 326 (RKEK…QWTC). Disordered regions lie at residues 386 to 405 (RRKINSAPSSPIKSGDGSSS), 435 to 456 (SACKAKSTVKQPGGSDKNQTPT), 483 to 551 (EQTL…AVDD), and 716 to 736 (PGGMGCSPPESARKLDVGTDD). A compositionally biased stretch (low complexity) spans 393-405 (PSSPIKSGDGSSS). Composition is skewed to basic and acidic residues over residues 509-539 (GRHEGDGTSHSEDHSAQERHPKRLPESDRGC) and 726-736 (SARKLDVGTDD).

The protein belongs to the E2F/DP family. Homodimer and heterodimer: mainly forms homodimers and, to a lesser extent, heterodimers with e2f7.

It is found in the nucleus. Atypical E2F transcription factor that participates in various processes such as angiogenesis and polyploidization of specialized cells. Mainly acts as a transcription repressor that binds DNA independently of DP proteins and specifically recognizes the E2 recognition site 5'-TTTC[CG]CGC-3'. Directly represses transcription of classical E2F transcription factors such as e2f1. Acts as a regulator of S-phase by recognizing and binding the E2-related site 5'-TTCCCGCC-3' and mediating repression of G1/S-regulated genes. Acts as a promoter of sprouting angiogenesis, possibly by acting as a transcription activator. This is Transcription factor E2F8 (e2f8) from Xenopus tropicalis (Western clawed frog).